The chain runs to 216 residues: Pyridoxine/pyridoxamine 5'-phosphate oxidase (216 aa).

Substrate contacts are provided by residues 12–15 and K70; that span reads RREY. Residues 65-70, 80-81, R86, K87, and Q109 contribute to the FMN site; these read RLVLLK and YT. The substrate site is built by Y127, R131, and S135. FMN is bound by residues 144–145 and W189; that span reads QS. 195–197 contacts substrate; that stretch reads RLH. R199 contributes to the FMN binding site.

This sequence belongs to the pyridoxamine 5'-phosphate oxidase family. Homodimer. FMN serves as cofactor.

It catalyses the reaction pyridoxamine 5'-phosphate + O2 + H2O = pyridoxal 5'-phosphate + H2O2 + NH4(+). The enzyme catalyses pyridoxine 5'-phosphate + O2 = pyridoxal 5'-phosphate + H2O2. The protein operates within cofactor metabolism; pyridoxal 5'-phosphate salvage; pyridoxal 5'-phosphate from pyridoxamine 5'-phosphate: step 1/1. Its pathway is cofactor metabolism; pyridoxal 5'-phosphate salvage; pyridoxal 5'-phosphate from pyridoxine 5'-phosphate: step 1/1. Catalyzes the oxidation of either pyridoxine 5'-phosphate (PNP) or pyridoxamine 5'-phosphate (PMP) into pyridoxal 5'-phosphate (PLP). The chain is Pyridoxine/pyridoxamine 5'-phosphate oxidase from Baumannia cicadellinicola subsp. Homalodisca coagulata.